A 204-amino-acid chain; its full sequence is MGSRSGEQGKRMAELSKNLKEGERILEPTRRPDGTLRKPIRIRPGYTPEDEVVKYQSKGSLMKKEMASQGPPGYEPDPAPKPKTKAAKRNERKKEKRLQATAEKANSSEDGSASNGSQSVNVLASEMEALDVSSNNDVCGGAPNPGTTGEDVEKRIRALKKKIRLTEAQQQKTASRDLNPEQLEKFSKLEEWRQELKALEDKAA.

2 disordered regions span residues 1-121 (MGSR…QSVN) and 133-153 (SSNN…EDVE). Residues 7–36 (EQGKRMAELSKNLKEGERILEPTRRPDGTL) are compositionally biased toward basic and acidic residues. Residues 104 to 121 (KANSSEDGSASNGSQSVN) are compositionally biased toward polar residues. A Nuclear export signal motif is present at residues 195-200 (ELKALE).

It belongs to the pym family. In terms of assembly, interacts with MAGO and Y14. Expressed in root and shoot meristems, cotyledons, vascular tissues of leaves, receptacle of flowers and siliques, and pollen grains.

It is found in the cytoplasm. The protein resides in the nucleus. The protein localises to the nucleolus. Its subcellular location is the nucleoplasm. Its function is as follows. Key regulator of the exon junction complex (EJC), a multiprotein complex that associates immediately upstream of the exon-exon junction on mRNAs and serves as a positional landmark for the intron exon structure of genes and directs post-transcriptional processes in the cytoplasm such as mRNA export, nonsense-mediated mRNA decay (NMD) or translation. Acts as an EJC disassembly factor, allowing translation-dependent EJC removal and recycling by disrupting mature EJC from spliced mRNAs. Can increase in vitro the expression from reporter constructs that contain leader introns required for the expression of different genes. In association with MAGO and PYM, participates in intron-mediated enhancement of gene expression. This is Partner of Y14 and mago from Arabidopsis thaliana (Mouse-ear cress).